A 462-amino-acid chain; its full sequence is A-type ATP synthase subunit B (462 aa).

Belongs to the ATPase alpha/beta chains family. As to quaternary structure, has multiple subunits with at least A(3), B(3), C, D, E, F, H, I and proteolipid K(x).

The protein resides in the cell membrane. In terms of biological role, component of the A-type ATP synthase that produces ATP from ADP in the presence of a proton gradient across the membrane. The B chain is a regulatory subunit. In Methanococcus maripaludis (strain C7 / ATCC BAA-1331), this protein is A-type ATP synthase subunit B.